The primary structure comprises 329 residues: DNA-directed RNA polymerase subunit alpha (329 aa).

The alpha N-terminal domain (alpha-NTD) stretch occupies residues methionine 1–glutamate 231. The tract at residues phenylalanine 249–arginine 329 is alpha C-terminal domain (alpha-CTD).

It belongs to the RNA polymerase alpha chain family. Homodimer. The RNAP catalytic core consists of 2 alpha, 1 beta, 1 beta' and 1 omega subunit. When a sigma factor is associated with the core the holoenzyme is formed, which can initiate transcription.

The enzyme catalyses RNA(n) + a ribonucleoside 5'-triphosphate = RNA(n+1) + diphosphate. Its function is as follows. DNA-dependent RNA polymerase catalyzes the transcription of DNA into RNA using the four ribonucleoside triphosphates as substrates. This chain is DNA-directed RNA polymerase subunit alpha, found in Polaromonas sp. (strain JS666 / ATCC BAA-500).